The primary structure comprises 465 residues: Zinc finger CCCH domain-containing protein 58 (465 aa).

The tract at residues 1-26 (MERYGGAGEDESRSDPSHEWSAQGTE) is disordered. C3H1-type zinc fingers lie at residues 51 to 79 (RPDEPDCIYYLRTGVCGYGSRCRFNHPRN), 97 to 125 (RMGQPVCQHFMRTGTCKFGASCKYHHPRQ), and 145 to 173 (RPGEKECSYFMRTGQCKFGSTCRYHHPVP). Disordered regions lie at residues 173–200 (PPGVQAPSQQQQQQLSAGPTMYPSLQSQ) and 274–302 (LSPSAPAYQSGPSSTGVSNKEQTFPQRPE). Over residues 177–191 (QAPSQQQQQQLSAGP) the composition is skewed to low complexity. Over residues 283–298 (SGPSSTGVSNKEQTFP) the composition is skewed to polar residues. 2 C3H1-type zinc fingers span residues 300–328 (RPEQPECQYFMRTGDCKFGTSCRFHHPME) and 345–373 (RPGAVPCTHFAQHGICKFGPACKFDHSLG). The segment covering 397-431 (SLGTLAPSSSSDQCTELISSSSIEPITTTTGGSET) has biased composition (low complexity). The disordered stretch occupies residues 397-465 (SLGTLAPSSS…SASNEAKTSS (69 aa)). Residues 444 to 453 (SHPEPAETNK) are compositionally biased toward basic and acidic residues. Positions 454 to 465 (GDSASNEAKTSS) are enriched in polar residues.

It is found in the nucleus. This chain is Zinc finger CCCH domain-containing protein 58, found in Arabidopsis thaliana (Mouse-ear cress).